Consider the following 685-residue polypeptide: DNA-directed RNA polymerase subunit beta' (685 aa).

Zn(2+)-binding residues include Cys69, Cys71, Cys87, and Cys90. Positions 489, 491, and 493 each coordinate Mg(2+).

This sequence belongs to the RNA polymerase beta' chain family. RpoC1 subfamily. In terms of assembly, in plastids the minimal PEP RNA polymerase catalytic core is composed of four subunits: alpha, beta, beta', and beta''. When a (nuclear-encoded) sigma factor is associated with the core the holoenzyme is formed, which can initiate transcription. The cofactor is Mg(2+). Zn(2+) is required as a cofactor.

The protein localises to the plastid. It localises to the chloroplast. The catalysed reaction is RNA(n) + a ribonucleoside 5'-triphosphate = RNA(n+1) + diphosphate. Its function is as follows. DNA-dependent RNA polymerase catalyzes the transcription of DNA into RNA using the four ribonucleoside triphosphates as substrates. This is DNA-directed RNA polymerase subunit beta' from Buxus microphylla (Littleleaf boxwood).